Here is a 553-residue protein sequence, read N- to C-terminus: Threonylcarbamoyladenosine tRNA methylthiotransferase (553 aa).

Residues 21–61 are disordered; it reads SAEDVKPQERYQNKKSVTVRAKKRVQIKPETDAEEKPTPRP. Composition is skewed to basic and acidic residues over residues 23–32 and 47–58; these read EDVKPQERYQ and IKPETDAEEKPT. The 108-residue stretch at 72-179 folds into the MTTase N-terminal domain; the sequence is QKVFVKTWGC…VVEVVEETLK (108 aa). The [4Fe-4S] cluster site is built by cysteine 81, cysteine 116, cysteine 145, cysteine 221, cysteine 225, and cysteine 228. Positions 207–438 constitute a Radical SAM core domain; sequence RKNPLIEIIS…DLFYSYEPYA (232 aa). The region spanning 438 to 500 is the TRAM domain; the sequence is AQRVGEMYTV…KFSMVGEILD (63 aa). The helical transmembrane segment at 533-553 threads the bilayer; it reads VGIALVVGSLAFLLQLLIRFL.

It belongs to the methylthiotransferase family. CDKAL1 subfamily. It depends on [4Fe-4S] cluster as a cofactor.

It is found in the membrane. It carries out the reaction N(6)-L-threonylcarbamoyladenosine(37) in tRNA + (sulfur carrier)-SH + AH2 + 2 S-adenosyl-L-methionine = 2-methylsulfanyl-N(6)-L-threonylcarbamoyladenosine(37) in tRNA + (sulfur carrier)-H + 5'-deoxyadenosine + L-methionine + A + S-adenosyl-L-homocysteine + 2 H(+). Catalyzes the methylthiolation of N6-threonylcarbamoyladenosine (t(6)A), leading to the formation of 2-methylthio-N6-threonylcarbamoyladenosine (ms(2)t(6)A) at position 37 in tRNAs that read codons beginning with adenine. The polypeptide is Threonylcarbamoyladenosine tRNA methylthiotransferase (Drosophila pseudoobscura pseudoobscura (Fruit fly)).